The chain runs to 83 residues: Short neurotoxin C (83 aa).

The signal sequence occupies residues 1–21; it reads MKTLLLTLVVVTMVCLDLAYT. 4 disulfides stabilise this stretch: C24–C45, C38–C62, C64–C75, and C76–C81.

The protein belongs to the three-finger toxin family. Short-chain subfamily. Type I alpha-neurotoxin sub-subfamily. In terms of tissue distribution, expressed by the venom gland.

The protein resides in the secreted. Functionally, binds to muscle nicotinic acetylcholine receptor (nAChR) and inhibit acetylcholine from binding to the receptor, thereby impairing neuromuscular transmission. The sequence is that of Short neurotoxin C from Laticauda colubrina (Yellow-lipped sea krait).